Reading from the N-terminus, the 153-residue chain is Ribosome maturation factor RimP (153 aa).

It belongs to the RimP family.

Its subcellular location is the cytoplasm. Functionally, required for maturation of 30S ribosomal subunits. The protein is Ribosome maturation factor RimP of Vesicomyosocius okutanii subsp. Calyptogena okutanii (strain HA).